The following is a 125-amino-acid chain: Fluoride-specific ion channel FluC (125 aa).

4 consecutive transmembrane segments (helical) span residues Ile-5–Leu-25, Ile-33–Val-53, Val-66–Leu-86, and Leu-100–Ile-120. Positions 76 and 79 each coordinate Na(+).

It belongs to the fluoride channel Fluc/FEX (TC 1.A.43) family.

The protein resides in the cell inner membrane. It carries out the reaction fluoride(in) = fluoride(out). Its activity is regulated as follows. Na(+) is not transported, but it plays an essential structural role and its presence is essential for fluoride channel function. Its function is as follows. Fluoride-specific ion channel. Important for reducing fluoride concentration in the cell, thus reducing its toxicity. The chain is Fluoride-specific ion channel FluC from Azobacteroides pseudotrichonymphae genomovar. CFP2.